The primary structure comprises 66 residues: Large ribosomal subunit protein bL33c (66 aa).

The protein belongs to the bacterial ribosomal protein bL33 family.

The protein localises to the plastid. It localises to the chloroplast. This Acorus calamus (Sweet flag) protein is Large ribosomal subunit protein bL33c.